We begin with the raw amino-acid sequence, 225 residues long: Ribosomal RNA small subunit methyltransferase G (225 aa).

S-adenosyl-L-methionine contacts are provided by residues Gly-71, Leu-76, 121 to 122 (AE), and Arg-139. The interval 204-225 (VVEARRATPSNGRGRPGRSSRR) is disordered.

The protein belongs to the methyltransferase superfamily. RNA methyltransferase RsmG family.

Its subcellular location is the cytoplasm. In terms of biological role, specifically methylates the N7 position of guanine in position 518 of 16S rRNA. This is Ribosomal RNA small subunit methyltransferase G from Mycobacterium sp. (strain JLS).